We begin with the raw amino-acid sequence, 1240 residues long: Ubiquitin carboxyl-terminal hydrolase 36 (1240 aa).

2 disordered regions span residues Ala37–Asn56 and Ser100–Ala144. Composition is skewed to low complexity over residues Ser47–Asn56 and Asn101–Gly132. One can recognise a USP domain in the interval Thr202–Asp512. Catalysis depends on Cys211, which acts as the Nucleophile. His471 acts as the Proton acceptor in catalysis. Residues Ala637–Val705 form a disordered region. The segment covering Lys639 to Lys649 has biased composition (polar residues). Low complexity predominate over residues Gln650–His662. The span at Ser668–Asn680 shows a compositional bias: acidic residues. Thr715 is modified (phosphothreonine). Disordered stretches follow at residues Tyr723–Thr818, Tyr831–Leu998, Asp1076–Ser1163, and Arg1198–Ser1240. 2 positions are modified to phosphoserine: Ser725 and Ser727. Low complexity predominate over residues Gln733–Gln744. Residues Ser759–Gln769 are compositionally biased toward acidic residues. Positions Asn794–Lys815 are enriched in low complexity. Residues Asp843–Ala859 show a composition bias toward acidic residues. Low complexity predominate over residues Thr869–Ser879. Residues Leu880–Gly890 show a composition bias toward polar residues. Phosphoserine is present on Ser895. Thr898 is subject to Phosphothreonine. Ser901 is subject to Phosphoserine. Acidic residues predominate over residues Asp918 to Ala941. Over residues Leu976–Arg988 the composition is skewed to polar residues. The span at Asp1076–Asn1103 shows a compositional bias: low complexity. Positions Ala1111–Asp1120 are enriched in basic and acidic residues. Low complexity predominate over residues Gln1231 to Ser1240.

This sequence belongs to the peptidase C19 family. As to quaternary structure, interacts with atms/PAF1, but not with CycT.

Its subcellular location is the nucleus. It localises to the nucleolus. The catalysed reaction is Thiol-dependent hydrolysis of ester, thioester, amide, peptide and isopeptide bonds formed by the C-terminal Gly of ubiquitin (a 76-residue protein attached to proteins as an intracellular targeting signal).. Functionally, required for maintaining multiple types of adult stem cells, including male and female germline, epithelial follicle cell and intestinal stem cells. May function as a transcriptional repressor by continually deubiquiting histone H2B at the promoters of genes critical for cellular differentiation, thereby preventing histone H3 'Lys-4' trimethylation (H3K4). Controls selective autophagy activation by ubiquitinated proteins. The sequence is that of Ubiquitin carboxyl-terminal hydrolase 36 (Usp36) from Drosophila grimshawi (Hawaiian fruit fly).